Reading from the N-terminus, the 464-residue chain is Citrate synthase 5, mitochondrial (464 aa).

Residues 1–25 (MVFFRSVSAISRLRSRAVQQSSLSN) constitute a mitochondrion transit peptide. Active-site residues include His300, His346, and Asp401.

This sequence belongs to the citrate synthase family.

Its subcellular location is the mitochondrion matrix. It carries out the reaction oxaloacetate + acetyl-CoA + H2O = citrate + CoA + H(+). It functions in the pathway carbohydrate metabolism; tricarboxylic acid cycle; isocitrate from oxaloacetate: step 1/2. This Arabidopsis thaliana (Mouse-ear cress) protein is Citrate synthase 5, mitochondrial (CSY5).